We begin with the raw amino-acid sequence, 292 residues long: Homoserine kinase (292 aa).

Position 81 to 91 (81 to 91 (RPRSGLGSSGA)) interacts with ATP.

This sequence belongs to the GHMP kinase family. Homoserine kinase subfamily.

Its subcellular location is the cytoplasm. The catalysed reaction is L-homoserine + ATP = O-phospho-L-homoserine + ADP + H(+). Its pathway is amino-acid biosynthesis; L-threonine biosynthesis; L-threonine from L-aspartate: step 4/5. Its function is as follows. Catalyzes the ATP-dependent phosphorylation of L-homoserine to L-homoserine phosphate. The protein is Homoserine kinase of Thermococcus gammatolerans (strain DSM 15229 / JCM 11827 / EJ3).